Here is a 106-residue protein sequence, read N- to C-terminus: Toxin-like structure LSTX-D8 (106 aa).

Residues 1–20 form the signal peptide; that stretch reads MTKVLVVVALLVTLISYSSS. The propeptide occupies 21 to 41; the sequence is EGIDDLEADELLSLMANEQTR. Intrachain disulfides connect Cys-45-Cys-60, Cys-52-Cys-69, Cys-59-Cys-85, and Cys-71-Cys-83.

This sequence belongs to the neurotoxin 19 (CSTX) family. 02 (D7) subfamily. In terms of tissue distribution, expressed by the venom gland.

The protein localises to the secreted. This Lycosa singoriensis (Wolf spider) protein is Toxin-like structure LSTX-D8.